A 498-amino-acid polypeptide reads, in one-letter code: Cysteine--tRNA ligase (498 aa).

Residue Cys-44 participates in Zn(2+) binding. Positions 46–56 match the 'HIGH' region motif; the sequence is PTVYSDAHLGH. The Zn(2+) site is built by Cys-235, His-260, and Glu-264. The 'KMSKS' region motif lies at 291 to 295; it reads KMSKS. Position 294 (Lys-294) interacts with ATP.

This sequence belongs to the class-I aminoacyl-tRNA synthetase family. In terms of assembly, monomer. The cofactor is Zn(2+).

It is found in the cytoplasm. It carries out the reaction tRNA(Cys) + L-cysteine + ATP = L-cysteinyl-tRNA(Cys) + AMP + diphosphate. The polypeptide is Cysteine--tRNA ligase (cysS) (Deinococcus radiodurans (strain ATCC 13939 / DSM 20539 / JCM 16871 / CCUG 27074 / LMG 4051 / NBRC 15346 / NCIMB 9279 / VKM B-1422 / R1)).